Reading from the N-terminus, the 641-residue chain is MGPPLKLFKNQKYQELKQDCMKDGRLFCDPTFLPENDSLFFNRLLPGKVVWKRPQDISDDPHLIVGNISNHQLIQGRLGNKAMISAFSCLAVQESHWTKAIPNHKEQEWDPRKPEKYAGIFRFRFWHFGEWTEVVIDDLLPTINGDLVFSFSTSMNEFWNALLEKAYAKLLGCYEALDGLTITDIIMDFTGTLAEIIDMQKGRYTDLVEEKYKLFGELYKTFTKGGLISCSIESPSQEEQEVETDWGLLKGYTYTMTDIRKLRLGERLVEVFSTEKLYMVRLRNPLGRQEWSGPWSEISEEWQQLTVTDRKNLGLVMSDDGEFWMSLEDFCHNFHKLNVCRNVNNPVFGRKELESVVGCWTVDDDPLMNRSGGCYNNRDTFLQNPQYIFTVPEDGHKVIMSLQQKDLRTYRRMGRPDNYIIGFELFKVEMNRRFRLHHLYIQERAGTSTYIDTRTVFLSKYLKKGNYVLVPTMFQHGRTSEFLLRIFSEVPVQLRELTLDMPKMSCWNLARGYPKVVTQITVHSAEGLEKKYANETVNPYLTIKCGKEEVRSPVQKNTVHAIFDTQAIFYRRTTDIPIIIQVWNSRKFCDQFLGQVTLDADPSDCRDLKSLYLRKKGGPTAKVKQGHISFKVISSDDLTEL.

The region spanning 26 to 343 (LFCDPTFLPE…FHKLNVCRNV (318 aa)) is the Calpain catalytic domain. The domain III stretch occupies residues 344–495 (NNPVFGRKEL…IFSEVPVQLR (152 aa)). Residues 498 to 621 (TLDMPKMSCW…YLRKKGGPTA (124 aa)) enclose the C2 domain.

Belongs to the peptidase C2 family. Interacts (via domain III) with microtubules. Interacts (via domain II) with ARHGEF2 (via the N-terminal zinc finger).

It is found in the cytoplasm. It localises to the perinuclear region. The protein resides in the cytoskeleton. The protein localises to the spindle. In terms of biological role, microtubule-stabilizing protein that may be involved in the regulation of microtubule dynamics and cytoskeletal organization. May act as a regulator of RAC1 activity through interaction with ARHGEF2 to control lamellipodial formation and cell mobility. Does not seem to have protease activity as it has lost the active site residues. In Rattus norvegicus (Rat), this protein is Calpain-6 (Capn6).